The chain runs to 137 residues: Large ribosomal subunit protein uL16 (137 aa).

The protein belongs to the universal ribosomal protein uL16 family. In terms of assembly, part of the 50S ribosomal subunit.

Its function is as follows. Binds 23S rRNA and is also seen to make contacts with the A and possibly P site tRNAs. The chain is Large ribosomal subunit protein uL16 from Mesorhizobium japonicum (strain LMG 29417 / CECT 9101 / MAFF 303099) (Mesorhizobium loti (strain MAFF 303099)).